A 280-amino-acid chain; its full sequence is Ribosomal RNA small subunit methyltransferase A (280 aa).

Residues His-15, Leu-17, Gly-42, Glu-64, Asp-89, and Asn-109 each contribute to the S-adenosyl-L-methionine site.

The protein belongs to the class I-like SAM-binding methyltransferase superfamily. rRNA adenine N(6)-methyltransferase family. RsmA subfamily.

It is found in the cytoplasm. The catalysed reaction is adenosine(1518)/adenosine(1519) in 16S rRNA + 4 S-adenosyl-L-methionine = N(6)-dimethyladenosine(1518)/N(6)-dimethyladenosine(1519) in 16S rRNA + 4 S-adenosyl-L-homocysteine + 4 H(+). Specifically dimethylates two adjacent adenosines (A1518 and A1519) in the loop of a conserved hairpin near the 3'-end of 16S rRNA in the 30S particle. May play a critical role in biogenesis of 30S subunits. The sequence is that of Ribosomal RNA small subunit methyltransferase A from Synechococcus sp. (strain WH7803).